The primary structure comprises 268 residues: Thiazole synthase (268 aa).

Residue K96 is the Schiff-base intermediate with DXP of the active site. Residues G157, 185 to 186 (AG), and 207 to 208 (NT) contribute to the 1-deoxy-D-xylulose 5-phosphate site. Residues 238 to 268 (PMRPREAASPSSPVEGVPFTPTGPRPGRGPQ) form a disordered region. Residues 258–268 (PTGPRPGRGPQ) are compositionally biased toward pro residues.

The protein belongs to the ThiG family. Homotetramer. Forms heterodimers with either ThiH or ThiS.

The protein localises to the cytoplasm. It carries out the reaction [ThiS sulfur-carrier protein]-C-terminal-Gly-aminoethanethioate + 2-iminoacetate + 1-deoxy-D-xylulose 5-phosphate = [ThiS sulfur-carrier protein]-C-terminal Gly-Gly + 2-[(2R,5Z)-2-carboxy-4-methylthiazol-5(2H)-ylidene]ethyl phosphate + 2 H2O + H(+). It functions in the pathway cofactor biosynthesis; thiamine diphosphate biosynthesis. Functionally, catalyzes the rearrangement of 1-deoxy-D-xylulose 5-phosphate (DXP) to produce the thiazole phosphate moiety of thiamine. Sulfur is provided by the thiocarboxylate moiety of the carrier protein ThiS. In vitro, sulfur can be provided by H(2)S. This chain is Thiazole synthase, found in Thermus thermophilus (strain ATCC 27634 / DSM 579 / HB8).